A 72-amino-acid chain; its full sequence is Protein LITTLE ZIPPER 4 (72 aa).

Residues 14–44 (YIIKENERLRKKAQILNQENQQLLFELKQKL) are a coiled coil. The disordered stretch occupies residues 42–72 (QKLSKTKNSSGSNQGNNNNNNNLSSSSSASG). Positions 49 to 72 (NSSGSNQGNNNNNNNLSSSSSASG) are enriched in low complexity.

Interacts with REV.

Functionally, competitive inhibitor of the HD-ZIPIII transcription factors in shoot apical meristem (SAM) development. Acts by forming non-functional heterodimers. Part of a negative feedback loop. Essential for proper functioning of stem cells in the SAM. The sequence is that of Protein LITTLE ZIPPER 4 from Arabidopsis thaliana (Mouse-ear cress).